The primary structure comprises 707 residues: Translation initiation factor eIF2B subunit epsilon (707 aa).

Disordered regions lie at residues His-489–Phe-526 and Ala-686–Asp-707. In terms of domain architecture, W2 spans Asp-516 to Ser-693. Acidic residues predominate over residues Glu-688 to Asp-707.

Belongs to the eIF-2B gamma/epsilon subunits family. As to quaternary structure, component of the translation initiation factor 2B (eIF2B) complex which is a heterodecamer of two sets of five different subunits: alpha, beta, gamma, delta and epsilon. Subunits alpha, beta and delta comprise a regulatory subcomplex and subunits epsilon and gamma comprise a catalytic subcomplex. Within the complex, the hexameric regulatory complex resides at the center, with the two heterodimeric catalytic subcomplexes bound on opposite sides.

It localises to the cytoplasm. Its subcellular location is the cytosol. Its function is as follows. Acts as a component of the translation initiation factor 2B (eIF2B) complex, which catalyzes the exchange of GDP for GTP on eukaryotic initiation factor 2 (eIF2) gamma subunit. Its guanine nucleotide exchange factor activity is repressed when bound to eIF2 complex phosphorylated on the alpha subunit, thereby limiting the amount of methionyl-initiator methionine tRNA available to the ribosome and consequently global translation is repressed. This is Translation initiation factor eIF2B subunit epsilon (eif2b5) from Dictyostelium discoideum (Social amoeba).